We begin with the raw amino-acid sequence, 118 residues long: Small ribosomal subunit protein uS13 (118 aa).

The disordered stretch occupies residues 94-118 (GLPVRGQRTKTNARTRKGPCKPIKK).

Belongs to the universal ribosomal protein uS13 family. Part of the 30S ribosomal subunit. Forms a loose heterodimer with protein S19. Forms two bridges to the 50S subunit in the 70S ribosome.

Functionally, located at the top of the head of the 30S subunit, it contacts several helices of the 16S rRNA. In the 70S ribosome it contacts the 23S rRNA (bridge B1a) and protein L5 of the 50S subunit (bridge B1b), connecting the 2 subunits; these bridges are implicated in subunit movement. Contacts the tRNAs in the A and P-sites. In Salmonella typhi, this protein is Small ribosomal subunit protein uS13.